Reading from the N-terminus, the 158-residue chain is Anti-tumor lectin (158 aa).

The residue at position 1 (Gln1) is a Blocked amino end (Gln). The Galectin domain occupies 12 to 155 (TSVDLAAPVT…STVVEAVTYT (144 aa)). N-acetyl-alpha-neuraminyl-(2-&gt;3)-beta-D-galactosyl-(1-&gt;4)-beta-D-glucose-binding residues include Asn43, His59, Arg63, Asn72, Arg74, Trp80, and Glu83.

Homodimer. Detected in the fruiting body.

Functionally, anti-tumor lectin with DNase activity. Inhibits the growth of several tumor cell lines in vitro. Induces lymphocyte infiltration and necrosis of tumor cells in a mouse tumor model. Induces apoptosis in HeLa cells. Binds N-acetylneuraminyl lactose (N-acetyl-alpha-neuraminyl-(2-&gt;3)-beta-D-galactosyl-(1-&gt;4)-beta-D-glucose). This chain is Anti-tumor lectin, found in Cyclocybe aegerita (Black poplar mushroom).